The primary structure comprises 446 residues: 3-phosphoshikimate 1-carboxyvinyltransferase (446 aa).

The 3-phosphoshikimate site is built by K27, S28, and R32. A phosphoenolpyruvate-binding site is contributed by K27. Phosphoenolpyruvate is bound by residues G100 and R128. S177, Q179, D330, and K357 together coordinate 3-phosphoshikimate. Q179 is a phosphoenolpyruvate binding site. D330 functions as the Proton acceptor in the catalytic mechanism. R361 and R406 together coordinate phosphoenolpyruvate.

This sequence belongs to the EPSP synthase family. As to quaternary structure, monomer.

It is found in the cytoplasm. The enzyme catalyses 3-phosphoshikimate + phosphoenolpyruvate = 5-O-(1-carboxyvinyl)-3-phosphoshikimate + phosphate. The protein operates within metabolic intermediate biosynthesis; chorismate biosynthesis; chorismate from D-erythrose 4-phosphate and phosphoenolpyruvate: step 6/7. In terms of biological role, catalyzes the transfer of the enolpyruvyl moiety of phosphoenolpyruvate (PEP) to the 5-hydroxyl of shikimate-3-phosphate (S3P) to produce enolpyruvyl shikimate-3-phosphate and inorganic phosphate. This chain is 3-phosphoshikimate 1-carboxyvinyltransferase, found in Sphingopyxis alaskensis (strain DSM 13593 / LMG 18877 / RB2256) (Sphingomonas alaskensis).